The following is a 318-amino-acid chain: Deoxyribose-phosphate aldolase (318 aa).

The active-site Proton donor/acceptor is aspartate 155. The active-site Schiff-base intermediate with acetaldehyde is the lysine 218. Lysine 254 acts as the Proton donor/acceptor in catalysis.

The protein belongs to the DeoC/FbaB aldolase family. DeoC type 2 subfamily. In terms of assembly, interacts with YBX1.

It localises to the cytoplasm. The protein resides in the cytoplasmic granule. Its subcellular location is the nucleus. It carries out the reaction 2-deoxy-D-ribose 5-phosphate = D-glyceraldehyde 3-phosphate + acetaldehyde. The protein operates within carbohydrate degradation; 2-deoxy-D-ribose 1-phosphate degradation; D-glyceraldehyde 3-phosphate and acetaldehyde from 2-deoxy-alpha-D-ribose 1-phosphate: step 2/2. Its function is as follows. Catalyzes a reversible aldol reaction between acetaldehyde and D-glyceraldehyde 3-phosphate to generate 2-deoxy-D-ribose 5-phosphate. Participates in stress granule (SG) assembly. May allow ATP production from extracellular deoxyinosine in conditions of energy deprivation. This is Deoxyribose-phosphate aldolase (Dera) from Mus musculus (Mouse).